The chain runs to 333 residues: Serine/threonine-protein phosphatase PP1-beta (333 aa).

Mn(2+)-binding residues include Asp63, His65, Asp91, and Asn123. The active-site Proton donor is the His124. Mn(2+)-binding residues include His172 and His247. Residues 306 to 333 (GAGGVGSNRPVTPPRNAPAAQPKKGAKK) form a disordered region. Residues 322–333 (APAAQPKKGAKK) show a composition bias toward low complexity.

Belongs to the PPP phosphatase family. PP-1 subfamily. As to quaternary structure, interacts with lab-1; the interaction is direct. Interacts with knl-1; the interaction is direct. The cofactor is Mn(2+).

The protein resides in the cytoplasm. Its subcellular location is the nucleus. The catalysed reaction is O-phospho-L-seryl-[protein] + H2O = L-seryl-[protein] + phosphate. It carries out the reaction O-phospho-L-threonyl-[protein] + H2O = L-threonyl-[protein] + phosphate. Functionally, serine/threonine-protein phosphatase essential for chromosomal dynamics during meiosis and mitosis. Antagonizes the function of air-2 in the regulation of chromosome cohesion. Dephosphorylates histone H3 at 'Ser-10'. Also involved in the activation of chloride channel clh-3 during cell swelling and meiotic maturation. Essential for embryogenesis. The sequence is that of Serine/threonine-protein phosphatase PP1-beta (gsp-2) from Caenorhabditis briggsae.